The primary structure comprises 229 residues: UPF0758 protein CLL_A0562 (229 aa).

Positions 107–229 constitute an MPN domain; sequence KIMSPNDLAM…FISLKEKGFI (123 aa). Zn(2+)-binding residues include His178, His180, and Asp191. The short motif at 178 to 191 is the JAMM motif element; sequence HNHPSGDPTPSKED.

The protein belongs to the UPF0758 family.

This Clostridium botulinum (strain Eklund 17B / Type B) protein is UPF0758 protein CLL_A0562.